Here is a 341-residue protein sequence, read N- to C-terminus: 4-amino-5-hydroxymethyl-2-methylpyrimidine phosphate synthase (341 aa).

At K62 the chain carries N6-(pyridoxal phosphate)lysine. Residue H66 is part of the active site. 115-118 provides a ligand contact to pyridoxal 5'-phosphate; that stretch reads GEFG. The CCCFC; essential for catalytic activity, may be the site of iron coordination motif lies at 195 to 199; the sequence is CCCFC.

Belongs to the NMT1/THI5 family. As to quaternary structure, homodimer. Fe cation serves as cofactor.

It carries out the reaction N(6)-(pyridoxal phosphate)-L-lysyl-[4-amino-5-hydroxymethyl-2-methylpyrimidine phosphate synthase] + L-histidyl-[4-amino-5-hydroxymethyl-2-methylpyrimidine phosphate synthase] + 2 Fe(3+) + 4 H2O = L-lysyl-[4-amino-5-hydroxymethyl-2-methylpyrimidine phosphate synthase] + (2S)-2-amino-5-hydroxy-4-oxopentanoyl-[4-amino-5-hydroxymethyl-2-methylpyrimidine phosphate synthase] + 4-amino-2-methyl-5-(phosphooxymethyl)pyrimidine + 3-oxopropanoate + 2 Fe(2+) + 2 H(+). The protein operates within cofactor biosynthesis; thiamine diphosphate biosynthesis. In terms of biological role, responsible for the formation of the pyrimidine heterocycle in the thiamine biosynthesis pathway. Catalyzes the formation of hydroxymethylpyrimidine phosphate (HMP-P) from histidine and pyridoxal phosphate (PLP). The protein uses PLP and the active site histidine to form HMP-P, generating an inactive enzyme. The enzyme can only undergo a single turnover, which suggests it is a suicide enzyme. The sequence is that of 4-amino-5-hydroxymethyl-2-methylpyrimidine phosphate synthase from Uromyces fabae (Rust fungus).